The sequence spans 207 residues: Small ribosomal subunit protein uS4 (207 aa).

The tract at residues 31-53 (KAKFDSKPGQHGRTSGARTSDYG) is disordered. The S4 RNA-binding domain occupies 97-157 (CRLDNVVYRM…EKSKKQARIV (61 aa)).

It belongs to the universal ribosomal protein uS4 family. As to quaternary structure, part of the 30S ribosomal subunit. Contacts protein S5. The interaction surface between S4 and S5 is involved in control of translational fidelity.

In terms of biological role, one of the primary rRNA binding proteins, it binds directly to 16S rRNA where it nucleates assembly of the body of the 30S subunit. With S5 and S12 plays an important role in translational accuracy. In Acidovorax ebreus (strain TPSY) (Diaphorobacter sp. (strain TPSY)), this protein is Small ribosomal subunit protein uS4.